A 131-amino-acid chain; its full sequence is Small ribosomal subunit protein uS8 (131 aa).

Belongs to the universal ribosomal protein uS8 family. Part of the 30S ribosomal subunit. Contacts proteins S5 and S12.

One of the primary rRNA binding proteins, it binds directly to 16S rRNA central domain where it helps coordinate assembly of the platform of the 30S subunit. This is Small ribosomal subunit protein uS8 from Neorickettsia sennetsu (strain ATCC VR-367 / Miyayama) (Ehrlichia sennetsu).